The chain runs to 80 residues: Defensin-like protein 14 (80 aa).

A signal peptide spans 1-29 (MAKSAAIITFLFAALVLFAAFEAPIMVEA). Residue Gln30 is modified to Pyrrolidone carboxylic acid. Disulfide bonds link Cys33–Cys80, Cys44–Cys65, Cys50–Cys74, and Cys54–Cys76.

Belongs to the DEFL family.

It localises to the secreted. Its function is as follows. Confers broad-spectrum resistance to pathogens. Has antifungal activity in vitro. The chain is Defensin-like protein 14 (PDF1.3) from Arabidopsis thaliana (Mouse-ear cress).